The chain runs to 787 residues: MANFLKSWVESDKREVGRMGKIADKVQSYEDEYSNLSDEALQAKTPEFKTRLANGETLDDILPEAFAVAREGAKRVLGLFPFRVQIIGGITLHEGNIAEMKTGEGKTLTATMPVYLNALAGQGVHVVTVNEYLSSRDATEMGELYNWLGLSVGLNLNAKTPEEKRDAYNSDITYSTNSELGFDYLRDNMVVYKEEMVQRPLNFAIVDEVDSILIDEARTPLIISGQAEKSTALYIRADRFVKTLKEDADYKIDWPTKTISLTEAGIGKAEANFGLDNLYDIENTALTHHLDESLRANFIMLKDIDYVVQDGEVLIVDQFTGRVMDGRRYSDGLHQAIEAKEGVEIQDETKTMANITYQNYFRMYNKLSGMTGTAKTEEEEFREIYNMEVISIPTNRPIARNDKSDVLYPTLESKFHAVVKDIKSRYEKGQPTLVGTVAVESSELLSRLLDENNVPHAVLNAKNHFKEAEIIMNAGQRGAVTIATNMAGRGTDIKLGPGVTDLGGLAVIGTERHESRRIDNQLRGRAGRQGDPGETQFYMSLEDDLMKRFGSERIKAFLDRMKISDDDAVIQSKMITRQVEAAQKRVEGNNYDTRKQTLQYDDVMREQREVIYKQRMQVIMAEDNLKEVIMPMISRTVKRIVQLHTQGDTADWNLEAIHDFATTSMVSEEQLTLEKLQGKSAEEIEALLMTFAEKNYATKQKQLSDENQMLEFEKVVILRVVDERWTDHIDAMDQLRNSIGLRGYGQMNPLVEYQEEGYRMFEEMISDIDYDTTRLFMKAEIRQNIRR.

Residues Q85, 103-107 (GEGKT), and D492 contribute to the ATP site.

Belongs to the SecA family. As to quaternary structure, monomer and homodimer. Part of the essential Sec protein translocation apparatus which comprises SecA, SecYEG and auxiliary proteins SecDF. Other proteins may also be involved.

The protein resides in the cell membrane. The protein localises to the cytoplasm. It catalyses the reaction ATP + H2O + cellular proteinSide 1 = ADP + phosphate + cellular proteinSide 2.. Part of the Sec protein translocase complex. Interacts with the SecYEG preprotein conducting channel. Has a central role in coupling the hydrolysis of ATP to the transfer of proteins into and across the cell membrane, serving as an ATP-driven molecular motor driving the stepwise translocation of polypeptide chains across the membrane. The protein is Protein translocase subunit SecA of Latilactobacillus sakei subsp. sakei (strain 23K) (Lactobacillus sakei subsp. sakei).